A 267-amino-acid polypeptide reads, in one-letter code: 2-dehydro-3-deoxyphosphooctonate aldolase (267 aa).

This sequence belongs to the KdsA family.

The protein localises to the cytoplasm. The enzyme catalyses D-arabinose 5-phosphate + phosphoenolpyruvate + H2O = 3-deoxy-alpha-D-manno-2-octulosonate-8-phosphate + phosphate. It functions in the pathway carbohydrate biosynthesis; 3-deoxy-D-manno-octulosonate biosynthesis; 3-deoxy-D-manno-octulosonate from D-ribulose 5-phosphate: step 2/3. The protein operates within bacterial outer membrane biogenesis; lipopolysaccharide biosynthesis. This chain is 2-dehydro-3-deoxyphosphooctonate aldolase, found in Campylobacter jejuni subsp. doylei (strain ATCC BAA-1458 / RM4099 / 269.97).